The following is a 267-amino-acid chain: Indole-3-glycerol phosphate synthase 1 (267 aa).

The protein belongs to the TrpC family.

The catalysed reaction is 1-(2-carboxyphenylamino)-1-deoxy-D-ribulose 5-phosphate + H(+) = (1S,2R)-1-C-(indol-3-yl)glycerol 3-phosphate + CO2 + H2O. Its pathway is amino-acid biosynthesis; L-tryptophan biosynthesis; L-tryptophan from chorismate: step 4/5. In Ralstonia nicotianae (strain ATCC BAA-1114 / GMI1000) (Ralstonia solanacearum), this protein is Indole-3-glycerol phosphate synthase 1 (trpC1).